A 1638-amino-acid chain; its full sequence is Ciliary rootlet coiled-coil protein 2 (1638 aa).

A compositionally biased stretch (polar residues) spans 1–20; sequence MSSTSSNPDDGDTTEQSQLG. Disordered regions lie at residues 1-21, 39-92, 396-423, and 1168-1213; these read MSSTSSNPDDGDTTEQSQLGL, REDR…REES, ARLRSPPRSVSPHQRMSPARTSSPTSLH, and TRRK…NLQE. The segment covering 67 to 82 has biased composition (low complexity); sequence SSSLGEEPLSGLREPP. Residues 85 to 144 are a coiled coil; sequence TSHAREESELLQEELTRLEDLLAQADAEREELASRCHMVSQRLQARLDTTEARLRKSELE. Over residues 406-421 the composition is skewed to polar residues; it reads SPHQRMSPARTSSPTS. Coiled coils occupy residues 426-1234 and 1281-1315; these read LQAV…VQKE and LQEASNQADSLQRSLDNACSRVHVLEQELAKAEGA. The span at 1180-1193 shows a compositional bias: basic and acidic residues; it reads RTLEAENQRKRQEV. Disordered stretches follow at residues 1338–1383 and 1506–1551; these read RNLL…VPVD and ALEE…QTTS. The segment covering 1349 to 1371 has biased composition (polar residues); sequence SPTTGSSQTRPGRQRTSPPTRSY. Coiled-coil stretches lie at residues 1412 to 1506 and 1542 to 1576; these read RDNS…LRQA and RRALREQTTSLRTERARLQGELAALRTRLIQTEQE.

The protein belongs to the rootletin family.

This is Ciliary rootlet coiled-coil protein 2 from Mus musculus (Mouse).